Reading from the N-terminus, the 165-residue chain is RxLR effector protein CRE12 (165 aa).

The first 23 residues, 1–23 (MRLAAFVLVAVAFAIIPDGRVSA), serve as a signal peptide directing secretion. The RxLR-dEER signature appears at 40–59 (RLLRLNAVPQPVETGNQEER).

The protein belongs to the RxLR effector family.

It is found in the secreted. It localises to the host cell. Its function is as follows. Effector that is involved in host plant infection. Contributes to virulence during the early infection stage, by inhibiting plant defense responses induced by both PAMP-triggered immunity (PTI) and effector-triggered immunity (ETI). This Phytophthora infestans (strain T30-4) (Potato late blight agent) protein is RxLR effector protein CRE12.